We begin with the raw amino-acid sequence, 490 residues long: 5'-3' exonuclease PLD3 (490 aa).

Over 1–38 the chain is Cytoplasmic; that stretch reads MKPKLMYQELKVPAEEPANELPMNEIEAWKAAEKKARW. Residues 39 to 59 traverse the membrane as a helical; Signal-anchor for type II membrane protein segment; sequence VLLVLILAVVGFGALMTQLFL. Topologically, residues 60–490 are lumenal; that stretch reads WEYGDLHLFG…DSVGNACRLL (431 aa). 2 disulfides stabilise this stretch: Cys-77–Cys-239 and Cys-81–Cys-237. Residues Asn-97 and Asn-132 are each glycosylated (N-linked (GlcNAc...) asparagine). A PLD phosphodiesterase 1 domain is found at 196 to 223; the sequence is THGVLHTKFWVVDQTHFYLGSANMDWRS. Active-site residues include His-201, Lys-203, and Asp-208. His-201 functions as the Proton donor in the catalytic mechanism. Positions 201 and 203 each coordinate phosphate. Residue Asn-218 coordinates phosphate. 3 N-linked (GlcNAc...) asparagine glycosylation sites follow: Asn-236, Asn-284, and Asn-387. The cysteines at positions 366 and 487 are disulfide-linked. Positions 411–437 constitute a PLD phosphodiesterase 2 domain; sequence YARVNHNKYMVTERATYIGTSNWSGNY. His-416 provides a ligand contact to phosphate. His-416 (nucleophile) is an active-site residue. Phe-438 contacts Mg(2+).

The protein belongs to the phospholipase D family. In terms of assembly, homodimer. Interacts with APP. Post-translationally, N-glycosylated. Proteolytically processed to a soluble active form that is stable within endosomes and lysosomes. During transport through the secretory pathway becomes proteolysed by cysteine proteases, thereby releasing a stable soluble lysosomal lumenal polypeptide, whereas the transmembrane-bound fragment is rapidly degraded. Its transport route to lysosomes involves ubiquitination and the ESCRT complex. In terms of processing, ubiquitinated at N-terminus. Ubiquitination mediates sorting into lysosomes. As to expression, widely expressed. In the brain, high levels of expression are detected in the frontal, temporal and occipital cortices and hippocampus. Expressed at low level in corpus callosum. Expressed in plasmacytoid dendritic cells and monocytes (at protein level).

It localises to the endoplasmic reticulum membrane. The protein localises to the lysosome lumen. The protein resides in the early endosome membrane. It is found in the late endosome membrane. Its subcellular location is the golgi apparatus membrane. It localises to the endosome membrane. The catalysed reaction is Exonucleolytic cleavage in the 5'- to 3'-direction to yield nucleoside 3'-phosphates.. The enzyme catalyses a 5'-end 5'-dephospho-ribonucleotidyl-ribonucleotide-RNA + H2O = a ribonucleoside 3'-phosphate + a 5'-end dephospho-ribonucleoside-RNA + H(+). It carries out the reaction a ribonucleoside 3'-phosphate-2'-3'-cyclophospho-GMP + H2O = a ribonucleoside 3'-phosphate + 2',3'-cyclophospho-GMP + H(+). It catalyses the reaction a 5'-end 5'-dephospho-2'-deoxyribonucleotidyl-2'-deoxyribonucleotide in single-stranded DNA + H2O = a 5'-end dephospho-2'-deoxyribonucleoside in single-stranded DNA + a 2'-deoxyribonucleoside 3'-phosphate + H(+). The catalysed reaction is a 5'-end 5'-phospho-2'-deoxyribonucleotide in single-stranded DNA + H2O = a 5'-end 5'-dephospho-2'-deoxyribonucleotide in single-stranded DNA + phosphate. The enzyme catalyses a 3-lyso-sn-glycero-1-phospho-(3'-acyl-1'-sn-glycerol) + a 1-acyl-sn-glycerol = a 3-acyl-sn-glycero-1-phospho-(3'-acyl-1'-sn-glycerol) + glycerol. It carries out the reaction 3-lyso-sn-glycero-1-phospho-(3'-(9Z-octadecenoyl)-1'-sn-glycerol) + 1-(9Z-octadecenoyl)-sn-glycerol = 3-(9Z-octadecenoyl)-sn-glycero-1-phospho-(3'-(9Z-octadecenoyl)-1'-sn-glycerol) + glycerol. The exonuclease activity toward ssDNA substrate is Ca(2+) and Mg(2+)-independent, but it is inhibited by Fe(2+), Cu(2+) and to a lesser extent Zn(2+) ions. 5'-&gt;3' exonuclease that hydrolyzes the phosphodiester bond of single-stranded DNA (ssDNA) and RNA molecules to form nucleoside 3'-monophosphates and 5'-end 5'-hydroxy deoxyribonucleotide/ribonucleotide fragments. Partially redundant with PLD4, can cleave all four nucleotides displaying higher efficiency for ssDNA and RNA fragments initiated with uridine and guanosine residues and lower efficiency for cytidine-initiated substrates. As a result, it does not always degrade polynucleotides to the single nucleotide level, it can stall at specific sites sparing certain fragments from exonucleolytic degradation. Processes self and pathogenic ssDNA and RNA molecules that reach the endolysosomal compartment via phagocytosis or autophagy and may serve as 'danger' signals for recognition by innate immune receptors such as toll-like receptors (TLRs). Degrades mitochondrial CpG-rich ssDNA fragments to prevent TLR9 activation and autoinflammatory response, but it can cleave viral RNA to generate ligands for TLR7 activation and initiate antiviral immune responses. In plasmacytoid dendritic cells, it cooperates with endonuclease RNASET2 to release 2',3'-cyclic guanosine monophosphate (2',3'-cGMP), a potent stimulatory ligand for TLR7. Produces 2',3'-cGMPs and cytidine-rich RNA fragments that occupy TLR7 ligand-binding pockets and trigger a signaling-competent state. Can exert polynucleotide phosphatase activity toward 5'-phosphorylated ssDNA substrates although at a slow rate. Transphosphatidylase that catalyzes the exchange with R to S stereo-inversion of the glycerol moiety between (S,R)-lysophosphatidylglycerol (LPG) and monoacylglycerol (MAG) substrates to yield (S,S)-bis(monoacylglycero)phosphate (BMP). Can synthesize a variety of (S,S)-BMPs representing the main phospholipid constituent of lysosomal intralumenal vesicle (ILV) membranes that bind acid hydrolases for lipid degradation. Regulates the homeostasis and interorganellar communication of the endolysosomal system with an overall impact on cellular removal of dysfunctional organelles via autophagy as well as proper protein and lipid turnover. May play a role in myotube formation in response to ER stress. This Homo sapiens (Human) protein is 5'-3' exonuclease PLD3.